The primary structure comprises 189 residues: Peptidyl-tRNA hydrolase (189 aa).

TRNA is bound at residue Tyr-14. His-19 serves as the catalytic Proton acceptor. TRNA-binding residues include Tyr-64, Asn-66, and Asn-112.

This sequence belongs to the PTH family. As to quaternary structure, monomer.

The protein localises to the cytoplasm. The catalysed reaction is an N-acyl-L-alpha-aminoacyl-tRNA + H2O = an N-acyl-L-amino acid + a tRNA + H(+). Its function is as follows. Hydrolyzes ribosome-free peptidyl-tRNAs (with 1 or more amino acids incorporated), which drop off the ribosome during protein synthesis, or as a result of ribosome stalling. Functionally, catalyzes the release of premature peptidyl moieties from peptidyl-tRNA molecules trapped in stalled 50S ribosomal subunits, and thus maintains levels of free tRNAs and 50S ribosomes. This is Peptidyl-tRNA hydrolase from Clostridium botulinum (strain Okra / Type B1).